We begin with the raw amino-acid sequence, 243 residues long: LexA repressor (243 aa).

The disordered stretch occupies residues M1 to N30. A compositionally biased stretch (basic and acidic residues) spans G21–N30. A DNA-binding region (H-T-H motif) is located at residues I56–R76. Catalysis depends on for autocatalytic cleavage activity residues S167 and K204.

It belongs to the peptidase S24 family. As to quaternary structure, homodimer.

The catalysed reaction is Hydrolysis of Ala-|-Gly bond in repressor LexA.. Its function is as follows. Represses a number of genes involved in the response to DNA damage (SOS response), including recA and lexA. In the presence of single-stranded DNA, RecA interacts with LexA causing an autocatalytic cleavage which disrupts the DNA-binding part of LexA, leading to derepression of the SOS regulon and eventually DNA repair. In Mycolicibacterium smegmatis (strain ATCC 700084 / mc(2)155) (Mycobacterium smegmatis), this protein is LexA repressor.